The following is a 640-amino-acid chain: Threonine--tRNA ligase (640 aa).

The 59-residue stretch at 1-59 (MKIKVKLPDGKEKEYDRGITPAEIAKELGIKKAIGAVVNGELWDLKRPIENDCELRLVT) folds into the TGS domain. The interval 240–531 (DHRKLGPQLE…LIEHFAGAFP (292 aa)) is catalytic. Cys332, His383, and His508 together coordinate Zn(2+).

Belongs to the class-II aminoacyl-tRNA synthetase family. In terms of assembly, homodimer. Zn(2+) serves as cofactor.

The protein resides in the cytoplasm. The catalysed reaction is tRNA(Thr) + L-threonine + ATP = L-threonyl-tRNA(Thr) + AMP + diphosphate + H(+). Functionally, catalyzes the attachment of threonine to tRNA(Thr) in a two-step reaction: L-threonine is first activated by ATP to form Thr-AMP and then transferred to the acceptor end of tRNA(Thr). Also edits incorrectly charged L-seryl-tRNA(Thr). The sequence is that of Threonine--tRNA ligase from Thermotoga maritima (strain ATCC 43589 / DSM 3109 / JCM 10099 / NBRC 100826 / MSB8).